The primary structure comprises 347 residues: N-acetyl-gamma-glutamyl-phosphate reductase (347 aa).

Residue Cys-150 is part of the active site.

Belongs to the NAGSA dehydrogenase family. Type 1 subfamily.

It is found in the cytoplasm. The catalysed reaction is N-acetyl-L-glutamate 5-semialdehyde + phosphate + NADP(+) = N-acetyl-L-glutamyl 5-phosphate + NADPH + H(+). Its pathway is amino-acid biosynthesis; L-arginine biosynthesis; N(2)-acetyl-L-ornithine from L-glutamate: step 3/4. In terms of biological role, catalyzes the NADPH-dependent reduction of N-acetyl-5-glutamyl phosphate to yield N-acetyl-L-glutamate 5-semialdehyde. The sequence is that of N-acetyl-gamma-glutamyl-phosphate reductase from Halothermothrix orenii (strain H 168 / OCM 544 / DSM 9562).